A 432-amino-acid polypeptide reads, in one-letter code: Serine--tRNA ligase (432 aa).

An L-serine-binding site is contributed by 230–232 (TAE). 261–263 (RSE) contacts ATP. Glu284 contacts L-serine. 348 to 351 (EVSS) lines the ATP pocket. Ser383 contributes to the L-serine binding site.

This sequence belongs to the class-II aminoacyl-tRNA synthetase family. Type-1 seryl-tRNA synthetase subfamily. Homodimer. The tRNA molecule binds across the dimer.

It localises to the cytoplasm. The catalysed reaction is tRNA(Ser) + L-serine + ATP = L-seryl-tRNA(Ser) + AMP + diphosphate + H(+). It carries out the reaction tRNA(Sec) + L-serine + ATP = L-seryl-tRNA(Sec) + AMP + diphosphate + H(+). Its pathway is aminoacyl-tRNA biosynthesis; selenocysteinyl-tRNA(Sec) biosynthesis; L-seryl-tRNA(Sec) from L-serine and tRNA(Sec): step 1/1. Functionally, catalyzes the attachment of serine to tRNA(Ser). Is also able to aminoacylate tRNA(Sec) with serine, to form the misacylated tRNA L-seryl-tRNA(Sec), which will be further converted into selenocysteinyl-tRNA(Sec). This Limosilactobacillus fermentum (strain NBRC 3956 / LMG 18251) (Lactobacillus fermentum) protein is Serine--tRNA ligase.